Consider the following 297-residue polypeptide: HTH-type transcriptional regulator ArgP (297 aa).

In terms of domain architecture, HTH lysR-type spans proline 4–threonine 60. Positions phenylalanine 21–lysine 40 form a DNA-binding region, H-T-H motif.

Belongs to the LysR transcriptional regulatory family. Homodimer.

Functionally, controls the transcription of genes involved in arginine and lysine metabolism. The polypeptide is HTH-type transcriptional regulator ArgP (Citrobacter koseri (strain ATCC BAA-895 / CDC 4225-83 / SGSC4696)).